Reading from the N-terminus, the 391-residue chain is Succinyl-diaminopimelate desuccinylase (391 aa).

Zn(2+) is bound at residue H78. The active site involves D80. D111 serves as a coordination point for Zn(2+). E145 acts as the Proton acceptor in catalysis. Zn(2+)-binding residues include E146, E174, and H360.

It belongs to the peptidase M20A family. DapE subfamily. As to quaternary structure, homodimer. Requires Zn(2+) as cofactor. The cofactor is Co(2+).

It catalyses the reaction N-succinyl-(2S,6S)-2,6-diaminopimelate + H2O = (2S,6S)-2,6-diaminopimelate + succinate. It functions in the pathway amino-acid biosynthesis; L-lysine biosynthesis via DAP pathway; LL-2,6-diaminopimelate from (S)-tetrahydrodipicolinate (succinylase route): step 3/3. Its function is as follows. Catalyzes the hydrolysis of N-succinyl-L,L-diaminopimelic acid (SDAP), forming succinate and LL-2,6-diaminopimelate (DAP), an intermediate involved in the bacterial biosynthesis of lysine and meso-diaminopimelic acid, an essential component of bacterial cell walls. This Albidiferax ferrireducens (strain ATCC BAA-621 / DSM 15236 / T118) (Rhodoferax ferrireducens) protein is Succinyl-diaminopimelate desuccinylase.